A 424-amino-acid polypeptide reads, in one-letter code: MAIKINEKGRGKFKPAPTYEKEEVRQLLMEKINEEMEAVATATSDISNDEIQYKSDKFNVLSLFCGAGGLDLGFELAGLEQSLGTDKALEAFKDRDVYNAIRHESVFHTVYANDIFSEALQTYEKNMPNHVFIHEKDIRKIKEFPSANLVIGGFPCPGFSEAGPRLVDDERNFLYIHFIRCLMQVQPEIFVAENVKGMMTLGGGEVFRQIVEDFGAAGYRVEARLLNARDYGVPQIRERVIIVGVRNDIDFNYEYPEITHGNEEGLKPYVTLEEAIGDLSLDPGPYFTGSYSTIFMSRNRKKKWTDQSFTIQASGRQAPIHPGGLPMEKVDKNKWIFPDGEENHRRLSVKEIKRIQTFPDWYEFSDGGNMKVSVNNRLDKQYKQIGNAVPVFLARAVAKSIAQFAADYLKDNHPHEAPQMKLFI.

The SAM-dependent MTase C5-type domain maps to 58–408 (FNVLSLFCGA…KSIAQFAADY (351 aa)). Cys156 functions as the S-methylcysteine intermediate in the catalytic mechanism. Cys181 is subject to S-methylcysteine; by autocatalysis.

The protein belongs to the class I-like SAM-binding methyltransferase superfamily. C5-methyltransferase family. As to quaternary structure, monomer. In the absence of DNA, can self-methylate two cysteine residues.

The catalysed reaction is a 2'-deoxycytidine in DNA + S-adenosyl-L-methionine = a 5-methyl-2'-deoxycytidine in DNA + S-adenosyl-L-homocysteine + H(+). A methylase, recognizes the double-stranded sequence 5'-GGCC-3', methylates C-3 on both strands, and protects the DNA from cleavage by the BspRI endonuclease. The polypeptide is Type II methyltransferase M.BspRI (bspRIM) (Lysinibacillus sphaericus (Bacillus sphaericus)).